Reading from the N-terminus, the 349-residue chain is Protein BCCIP homolog (349 aa).

Positions Met-1–Gly-10 are enriched in basic residues. Residues Met-1 to Gln-65 form a disordered region. A compositionally biased stretch (basic and acidic residues) spans Ala-11–Glu-33. The span at Glu-34 to Gln-65 shows a compositional bias: acidic residues.

It belongs to the BCP1 family.

The polypeptide is Protein BCCIP homolog (Caenorhabditis elegans).